Reading from the N-terminus, the 437-residue chain is MSGLDGVKRTTPLQTHSIIISDQVPSDQDAHQYLRLRDQSEATQVMAEPGEGGSETVALPPPPPSEEGGVPQDAAGRGGTPQIRVVGGRGHVAIKAGQEEGQPPAEGLAAASVVMAADRSLKKGVQGGEKALEICGAQRSASELTAGAEAEAEEVKTGKCATVSAAVAERESAEVVKEGLAEKEVMEEQMEVEEQPPEGEEIEVAEEDRLEEEAREEEGPWPLHEALRMDPLEAIQLELDTVNAQADRAFQQLEHKFGRMRRHYLERRNYIIQNIPGFWMTAFRNHPQLSAMIRGQDAEMLRYITNLEVKELRHPRTGCKFKFFFRRNPYFRNKLIVKEYEVRSSGRVVSLSTPIIWRRGHEPQSFIRRNQDLICSFFTWFSDHSLPESDKIAEIIKEDLWPNPLQYYLLREGVRRARRRPLREPVEIPRPFGFQSG.

Positions 1 to 81 (MSGLDGVKRT…QDAAGRGGTP (81 aa)) are disordered. Polar residues predominate over residues 11 to 26 (TPLQTHSIIISDQVPS). Basic and acidic residues predominate over residues 28–40 (QDAHQYLRLRDQS). Lys156 is covalently cross-linked (Glycyl lysine isopeptide (Lys-Gly) (interchain with G-Cter in SUMO2)).

Belongs to the nucleosome assembly protein (NAP) family. Post-translationally, ubiquitinated by the CRL2(APPBP2) complex, which recognizes the Arg-Xaa-Xaa-Gly sequence at the C-terminus, leading to its degradation. As to expression, expressed in testis, ovary, liver, spleen, brain, kidney, prostate, lung, liver, and heart.

It is found in the nucleus. It localises to the nucleolus. This chain is Testis-specific Y-encoded-like protein 1 (TSPYL1), found in Homo sapiens (Human).